A 32-amino-acid polypeptide reads, in one-letter code: U21-ctenitoxin-Co1a (32 aa).

Disulfide bonds link Cys3/Cys17, Cys10/Cys21, and Cys16/Cys30.

Expressed by the venom gland.

It localises to the secreted. Its function is as follows. Not toxic to mice by intracerebroventricular injection. This is U21-ctenitoxin-Co1a from Ctenus ornatus (Brazilian spider).